The sequence spans 119 residues: Putative nitrilase-like protein YIL165C (119 aa).

One can recognise a CN hydrolase domain in the interval 1–82; sequence MKNIAYEGRL…EGLLTAEINT (82 aa). The Proton acceptor role is filled by Asp21.

Belongs to the carbon-nitrogen hydrolase superfamily. Nitrilase family.

The protein is Putative nitrilase-like protein YIL165C of Saccharomyces cerevisiae (strain ATCC 204508 / S288c) (Baker's yeast).